The sequence spans 586 residues: A-type ATP synthase subunit A (586 aa).

233 to 240 (GPFGSGKT) lines the ATP pocket.

It belongs to the ATPase alpha/beta chains family. Has multiple subunits with at least A(3), B(3), C, D, E, F, H, I and proteolipid K(x).

It localises to the cell membrane. It carries out the reaction ATP + H2O + 4 H(+)(in) = ADP + phosphate + 5 H(+)(out). In terms of biological role, component of the A-type ATP synthase that produces ATP from ADP in the presence of a proton gradient across the membrane. The A chain is the catalytic subunit. The chain is A-type ATP synthase subunit A from Methanococcus aeolicus (strain ATCC BAA-1280 / DSM 17508 / OCM 812 / Nankai-3).